A 214-amino-acid chain; its full sequence is Cytochrome b (214 aa).

4 helical membrane-spanning segments follow: residues 31 to 51 (FGSM…FLAI), 75 to 96 (WIMQ…YIHI), 111 to 131 (WLSG…GYVL), and 176 to 196 (FFAL…IHIL). Positions 81 and 95 each coordinate heme b. 2 residues coordinate heme b: H180 and H194. Residue H199 coordinates a ubiquinone.

It belongs to the cytochrome b family. The cytochrome bc1 complex contains 3 respiratory subunits (MT-CYB, CYC1 and UQCRFS1), 2 core proteins (UQCRC1 and UQCRC2) and probably 6 low-molecular weight proteins. Heme b serves as cofactor.

The protein resides in the mitochondrion inner membrane. In terms of biological role, component of the ubiquinol-cytochrome c reductase complex (complex III or cytochrome b-c1 complex) that is part of the mitochondrial respiratory chain. The b-c1 complex mediates electron transfer from ubiquinol to cytochrome c. Contributes to the generation of a proton gradient across the mitochondrial membrane that is then used for ATP synthesis. This is Cytochrome b (MT-CYB) from Trimeresurus stejnegeri (Chinese green tree viper).